Here is a 382-residue protein sequence, read N- to C-terminus: S-adenosylmethionine synthase (382 aa).

ATP is bound at residue histidine 15. Aspartate 17 serves as a coordination point for Mg(2+). Residue glutamate 43 coordinates K(+). Residues glutamate 56 and glutamine 99 each contribute to the L-methionine site. A flexible loop region spans residues 99 to 109 (QSPDINQGVDR). ATP is bound by residues 164-166 (DAK), 230-231 (RF), aspartate 239, 245-246 (RK), alanine 262, and lysine 266. Aspartate 239 provides a ligand contact to L-methionine. An L-methionine-binding site is contributed by lysine 270.

This sequence belongs to the AdoMet synthase family. In terms of assembly, homotetramer; dimer of dimers. Mg(2+) serves as cofactor. Requires K(+) as cofactor.

It localises to the cytoplasm. The enzyme catalyses L-methionine + ATP + H2O = S-adenosyl-L-methionine + phosphate + diphosphate. It participates in amino-acid biosynthesis; S-adenosyl-L-methionine biosynthesis; S-adenosyl-L-methionine from L-methionine: step 1/1. Functionally, catalyzes the formation of S-adenosylmethionine (AdoMet) from methionine and ATP. The overall synthetic reaction is composed of two sequential steps, AdoMet formation and the subsequent tripolyphosphate hydrolysis which occurs prior to release of AdoMet from the enzyme. The polypeptide is S-adenosylmethionine synthase (Psychromonas ingrahamii (strain DSM 17664 / CCUG 51855 / 37)).